Consider the following 137-residue polypeptide: Small ribosomal subunit protein uS12 (137 aa).

Disordered regions lie at residues 1–21 (MPTI…KSDS) and 36–57 (TKLS…TPKK). D102 is modified (3-methylthioaspartic acid).

The protein belongs to the universal ribosomal protein uS12 family. As to quaternary structure, part of the 30S ribosomal subunit. Contacts proteins S8 and S17. May interact with IF1 in the 30S initiation complex.

Its function is as follows. With S4 and S5 plays an important role in translational accuracy. Functionally, interacts with and stabilizes bases of the 16S rRNA that are involved in tRNA selection in the A site and with the mRNA backbone. Located at the interface of the 30S and 50S subunits, it traverses the body of the 30S subunit contacting proteins on the other side and probably holding the rRNA structure together. The combined cluster of proteins S8, S12 and S17 appears to hold together the shoulder and platform of the 30S subunit. The chain is Small ribosomal subunit protein uS12 from Streptococcus agalactiae serotype Ia (strain ATCC 27591 / A909 / CDC SS700).